Here is a 76-residue protein sequence, read N- to C-terminus: Acyl carrier protein (76 aa).

The 75-residue stretch at 2–76 (SDIAERVKKI…QAIDYIQSHT (75 aa)) folds into the Carrier domain. Ser-36 carries the O-(pantetheine 4'-phosphoryl)serine modification.

It belongs to the acyl carrier protein (ACP) family. Post-translationally, 4'-phosphopantetheine is transferred from CoA to a specific serine of apo-ACP by AcpS. This modification is essential for activity because fatty acids are bound in thioester linkage to the sulfhydryl of the prosthetic group.

It is found in the cytoplasm. The protein operates within lipid metabolism; fatty acid biosynthesis. Carrier of the growing fatty acid chain in fatty acid biosynthesis. This chain is Acyl carrier protein, found in Methylococcus capsulatus (strain ATCC 33009 / NCIMB 11132 / Bath).